A 376-amino-acid chain; its full sequence is Carbamoyl phosphate synthase small chain (376 aa).

The interval 1-183 (MSKAVLVLED…PDGPPGVSRF (183 aa)) is CPSase. L-glutamine is bound by residues S46, G232, and G234. A Glutamine amidotransferase type-1 domain is found at 184 to 376 (TVAALDLGIK…FVELMAGEGR (193 aa)). The active-site Nucleophile is the C260. L-glutamine is bound by residues F261, Q264, N302, G304, and F305. Residues H350 and E352 contribute to the active site.

It belongs to the CarA family. In terms of assembly, composed of two chains; the small (or glutamine) chain promotes the hydrolysis of glutamine to ammonia, which is used by the large (or ammonia) chain to synthesize carbamoyl phosphate. Tetramer of heterodimers (alpha,beta)4.

It catalyses the reaction hydrogencarbonate + L-glutamine + 2 ATP + H2O = carbamoyl phosphate + L-glutamate + 2 ADP + phosphate + 2 H(+). The catalysed reaction is L-glutamine + H2O = L-glutamate + NH4(+). The protein operates within amino-acid biosynthesis; L-arginine biosynthesis; carbamoyl phosphate from bicarbonate: step 1/1. It functions in the pathway pyrimidine metabolism; UMP biosynthesis via de novo pathway; (S)-dihydroorotate from bicarbonate: step 1/3. Its function is as follows. Small subunit of the glutamine-dependent carbamoyl phosphate synthetase (CPSase). CPSase catalyzes the formation of carbamoyl phosphate from the ammonia moiety of glutamine, carbonate, and phosphate donated by ATP, constituting the first step of 2 biosynthetic pathways, one leading to arginine and/or urea and the other to pyrimidine nucleotides. The small subunit (glutamine amidotransferase) binds and cleaves glutamine to supply the large subunit with the substrate ammonia. In Mycobacterium bovis (strain ATCC BAA-935 / AF2122/97), this protein is Carbamoyl phosphate synthase small chain.